A 293-amino-acid chain; its full sequence is N(1)-aminopropylagmatine ureohydrolase (293 aa).

Positions 105, 128, 130, 132, 210, and 212 each coordinate Mn(2+).

This sequence belongs to the arginase family. Requires Mn(2+) as cofactor.

The catalysed reaction is N(1)-(3-aminopropyl)agmatine + H2O = urea + spermidine. It functions in the pathway amine and polyamine biosynthesis; spermidine biosynthesis. Its function is as follows. Involved in the biosynthesis of polyamines which are thought to support the growth of thermophilic microorganisms under high-temperature conditions. It seems that long-chain and branched-chain of polyamines effectively stabilize DNA and RNA, respectively. Catalyzes the decarboxylation of N1-(3-aminopropyl)agmatine to yield spermidine and urea. Does not act on agmatine. The sequence is that of N(1)-aminopropylagmatine ureohydrolase from Thermus thermophilus (strain ATCC BAA-163 / DSM 7039 / HB27).